The sequence spans 79 residues: Acyl carrier protein 1 (79 aa).

Residues 2-77 (DNIEQRVKKI…QAIDYARANV (76 aa)) enclose the Carrier domain. Serine 37 carries the post-translational modification O-(pantetheine 4'-phosphoryl)serine.

This sequence belongs to the acyl carrier protein (ACP) family. Post-translationally, 4'-phosphopantetheine is transferred from CoA to a specific serine of apo-ACP by AcpS. This modification is essential for activity because fatty acids are bound in thioester linkage to the sulfhydryl of the prosthetic group.

It is found in the cytoplasm. The protein operates within lipid metabolism; fatty acid biosynthesis. In terms of biological role, carrier of the growing fatty acid chain in fatty acid biosynthesis. The sequence is that of Acyl carrier protein 1 from Ralstonia nicotianae (strain ATCC BAA-1114 / GMI1000) (Ralstonia solanacearum).